Here is a 751-residue protein sequence, read N- to C-terminus: Conserved oligomeric Golgi complex subunit 5 (751 aa).

Disordered regions lie at residues 1–21 (MVTGDPVATKTPNAADSDDND) and 244–263 (SPTHNVSKPAPSRGPGKTPQ).

This sequence belongs to the COG5 family. As to quaternary structure, component of the conserved oligomeric Golgi complex which is composed of eight different subunits and is required for normal Golgi morphology and localization.

Its subcellular location is the golgi apparatus membrane. Functionally, required for normal Golgi function and necessary during spermatogenesis. Required for cleavage furrow ingression during cytokinesis in dividing spermatocytes and for the extensive polarized cell growth that accompanies spermatid elongation. In Drosophila melanogaster (Fruit fly), this protein is Conserved oligomeric Golgi complex subunit 5 (fws).